Reading from the N-terminus, the 132-residue chain is D-ribose pyranase (132 aa).

His-20 functions as the Proton donor in the catalytic mechanism. Substrate is bound by residues Asp-28, His-99, and 121–123; that span reads YSN.

This sequence belongs to the RbsD / FucU family. RbsD subfamily. As to quaternary structure, homodecamer.

Its subcellular location is the cytoplasm. The enzyme catalyses beta-D-ribopyranose = beta-D-ribofuranose. It functions in the pathway carbohydrate metabolism; D-ribose degradation; D-ribose 5-phosphate from beta-D-ribopyranose: step 1/2. In terms of biological role, catalyzes the interconversion of beta-pyran and beta-furan forms of D-ribose. In Lactococcus lactis subsp. cremoris (strain MG1363), this protein is D-ribose pyranase.